The primary structure comprises 511 residues: MSQSKKTVALIIMDGWGHREDTTNNAIAHAKTPVLDRLTKETTNTLISASGMDVGLPGGQMGNSEVGHVNLGAGRVVYQDFTRVTKAIEDGDFFENEVLVSNVDKAIKQDKAVHIMGLLSPGGVHSHQDHIFAMIKLAAKRGAKKIFLHAFLDGRDTPPRSAKAPLEAADKVFEELGVGKTATLVGRYYAMDRDSRWDRVEKAYKVIAKGEGAFNVACAIEGLENSYSRDENDEFMQPTVIGDAAPIEDGDALVFMNFRADRAREISRPFVEKDFSDFEKGEHIDLSAFVMLTQYAESIDAPAAYPPVALVNVMGEWLANHGKTQLRISETEKFAHVTFFYSGGKEDLYEGEERILIPSPKVATYDLQPEMNSTELTDKLVEAIESGKFDAIICNYPNGDMVGHTGNFDAAVKACEAVDTCIGRVVEAIKKVGGDCLITADHGNAEKMADETTGQAHTAHTSELVPFWHVGQKTTARSGGTLSDVAPTMLHLMGMEQPAEMTGKPIVTLVK.

Residues Asp14 and Ser64 each coordinate Mn(2+). Residue Ser64 is the Phosphoserine intermediate of the active site. Substrate is bound by residues His125, Arg155–Asp156, Arg187, Arg193, Arg259–Arg262, and Lys333. Mn(2+)-binding residues include Asp400, His404, Asp441, His442, and His460.

It belongs to the BPG-independent phosphoglycerate mutase family. Monomer. Mn(2+) is required as a cofactor.

It carries out the reaction (2R)-2-phosphoglycerate = (2R)-3-phosphoglycerate. It functions in the pathway carbohydrate degradation; glycolysis; pyruvate from D-glyceraldehyde 3-phosphate: step 3/5. Catalyzes the interconversion of 2-phosphoglycerate and 3-phosphoglycerate. In Pseudoalteromonas atlantica (strain T6c / ATCC BAA-1087), this protein is 2,3-bisphosphoglycerate-independent phosphoglycerate mutase.